Consider the following 499-residue polypeptide: Phenylalanine--tRNA ligase alpha subunit B (499 aa).

L-phenylalanine-binding positions include Thr330, 373–375, and Tyr413; that span reads QIE. A Mg(2+)-binding site is contributed by Glu415. Phe439 contributes to the L-phenylalanine binding site.

It belongs to the class-II aminoacyl-tRNA synthetase family. Phe-tRNA synthetase alpha subunit type 2 subfamily. As to quaternary structure, heterotetramer; dimer of two heterodimers formed by alpha and beta subunits. It depends on Mg(2+) as a cofactor.

The protein localises to the cytoplasm. The enzyme catalyses tRNA(Phe) + L-phenylalanine + ATP = L-phenylalanyl-tRNA(Phe) + AMP + diphosphate + H(+). This is Phenylalanine--tRNA ligase alpha subunit B (farsa-b) from Xenopus laevis (African clawed frog).